A 521-amino-acid polypeptide reads, in one-letter code: RING-type E3 ubiquitin-protein ligase PPIL2 (521 aa).

Residues 35 to 108 enclose the U-box domain; the sequence is RRLPFDHCSL…GQYHCPVLYS (74 aa). Residues 197–217 adopt a coiled-coil conformation; sequence LKNTNSETRETLQELYKEFKG. Lys216 is covalently cross-linked (Glycyl lysine isopeptide (Lys-Gly) (interchain with G-Cter in SUMO2)). Residues 278-433 enclose the PPIase cyclophilin-type domain; it reads KKGYVRLHTN…EEVLICTTTV (156 aa). Residues 447–462 are compositionally biased toward basic and acidic residues; the sequence is QERKKTQHQVDPEAKV. The disordered stretch occupies residues 447 to 521; the sequence is QERKKTQHQV…SRGFGDFSSW (75 aa). Polar residues predominate over residues 465-478; the sequence is SQPQPGNQGPQTYR. Lys483 is subject to N6-acetyllysine.

Belongs to the cyclophilin-type PPIase family. PPIL2 subfamily. Component of the minor spliceosome, which splices U12-type introns. Within this complex, interacts with PRPF8/PRP8, EFTUD2/SNU114 and PLRG1. Interacts with isoform 2 of BSG. Interacts (via the PPIase cyclophilin-type domain) with CRNKL1; they may form a trimeric complex with HSP90.

It localises to the nucleus. It carries out the reaction S-ubiquitinyl-[E2 ubiquitin-conjugating enzyme]-L-cysteine + [acceptor protein]-L-lysine = [E2 ubiquitin-conjugating enzyme]-L-cysteine + N(6)-ubiquitinyl-[acceptor protein]-L-lysine.. Its pathway is protein modification; protein ubiquitination. Has a ubiquitin-protein ligase activity acting as an E3 ubiquitin protein ligase or as an ubiquitin-ubiquitin ligase promoting elongation of ubiquitin chains on substrates. By mediating 'Lys-48'-linked polyubiquitination of proteins could target them for proteasomal degradation. May also function as a chaperone, playing a role in transport to the cell membrane of BSG/Basigin for instance. Probable inactive PPIase with no peptidyl-prolyl cis-trans isomerase activity. As a component of the minor spliceosome, involved in the splicing of U12-type introns in pre-mRNAs. This is RING-type E3 ubiquitin-protein ligase PPIL2 from Mus musculus (Mouse).